We begin with the raw amino-acid sequence, 292 residues long: Putative gonadotropin-releasing hormone II receptor (292 aa).

Over 1–28 (MSAGNGTPWDATWNITVQWLAVDIACRT) the chain is Extracellular. Residues Cys-26 and Cys-101 are joined by a disulfide bond. The helical transmembrane segment at 29–49 (LMFLKLMATYSAAFLPVVIGL) threads the bilayer. The Cytoplasmic portion of the chain corresponds to 50–67 (DRQAAVLNPLGSRSGVRK). A helical membrane pass occupies residues 68-88 (LLGAAWGLSFLLAFPQLFLFH). At 89–115 (TVHCAGPVPFTQCVTKGSFKAQWQETT) the chain is on the extracellular side. The helical transmembrane segment at 116–136 (YNLFTFCCLFLLPLTAMAICY) threads the bilayer. Residues 137-177 (SRIVLSVSRPQTRKGSHAPAGEFALPRSFDNCPRVRLRALR) lie on the Cytoplasmic side of the membrane. Residues 178 to 198 (LALLILLTFILCWTPYYLLGM) traverse the membrane as a helical segment. Over 199 to 216 (WYWFSPTMLTEVPPSLSH) the chain is Extracellular. A helical membrane pass occupies residues 217–237 (ILFLLGLLNAPLDPLLYGAFT). At 238-292 (LGCRRGHQELSIDSSKEGSGRMLQEEIHAFRQLEVQKTVTSRRAGETKGISITSI) the chain is on the cytoplasmic side.

It belongs to the G-protein coupled receptor 1 family. In terms of processing, phosphorylated on the C-terminal cytoplasmic tail. Expressed in many tissues.

Its subcellular location is the cell membrane. In terms of biological role, putative receptor for gonadotropin releasing hormone II (GnRH II) which is most probably non-functional. This is Putative gonadotropin-releasing hormone II receptor (GNRHR2) from Homo sapiens (Human).